The following is a 35-amino-acid chain: MKIGIIGAMEEEVTLLRDKIENRQTITIGGSEIYT.

The Proton acceptor role is filled by E12.

Belongs to the PNP/UDP phosphorylase family. MtnN subfamily. Homodimer.

The catalysed reaction is S-adenosyl-L-homocysteine + H2O = S-(5-deoxy-D-ribos-5-yl)-L-homocysteine + adenine. The enzyme catalyses S-methyl-5'-thioadenosine + H2O = 5-(methylsulfanyl)-D-ribose + adenine. It carries out the reaction 5'-deoxyadenosine + H2O = 5-deoxy-D-ribose + adenine. It participates in amino-acid biosynthesis; L-methionine biosynthesis via salvage pathway; S-methyl-5-thio-alpha-D-ribose 1-phosphate from S-methyl-5'-thioadenosine (hydrolase route): step 1/2. Its function is as follows. Catalyzes the irreversible cleavage of the glycosidic bond in both 5'-methylthioadenosine (MTA) and S-adenosylhomocysteine (SAH/AdoHcy) to adenine and the corresponding thioribose, 5'-methylthioribose and S-ribosylhomocysteine, respectively. Also cleaves 5'-deoxyadenosine, a toxic by-product of radical S-adenosylmethionine (SAM) enzymes, into 5-deoxyribose and adenine. Thus, is required for in vivo function of the radical SAM enzymes biotin synthase and lipoic acid synthase, that are inhibited by 5'-deoxyadenosine accumulation. This Klebsiella pneumoniae protein is 5'-methylthioadenosine/S-adenosylhomocysteine nucleosidase (mtnN).